The following is a 216-amino-acid chain: 3-keto-L-gulonate-6-phosphate decarboxylase UlaD (216 aa).

Residue Asp-11 coordinates substrate. Residues Glu-33 and Asp-62 each contribute to the Mg(2+) site. Substrate is bound at residue Arg-192.

It belongs to the HPS/KGPDC family. KGPDC subfamily. As to quaternary structure, homodimer. Mg(2+) is required as a cofactor.

The catalysed reaction is 3-dehydro-L-gulonate 6-phosphate + H(+) = L-xylulose 5-phosphate + CO2. It functions in the pathway cofactor degradation; L-ascorbate degradation; D-xylulose 5-phosphate from L-ascorbate: step 2/4. Its function is as follows. Catalyzes the decarboxylation of 3-keto-L-gulonate-6-P into L-xylulose-5-P. Is involved in the anaerobic L-ascorbate utilization. The protein is 3-keto-L-gulonate-6-phosphate decarboxylase UlaD of Salmonella choleraesuis (strain SC-B67).